The primary structure comprises 141 residues: Large ribosomal subunit protein bL17 (141 aa).

This sequence belongs to the bacterial ribosomal protein bL17 family. In terms of assembly, part of the 50S ribosomal subunit. Contacts protein L32.

The protein is Large ribosomal subunit protein bL17 of Rhizobium meliloti (strain 1021) (Ensifer meliloti).